We begin with the raw amino-acid sequence, 294 residues long: Acetyl-coenzyme A carboxylase carboxyl transferase subunit beta (294 aa).

Residues Leu29–Ala294 enclose the CoA carboxyltransferase N-terminal domain. Residues Cys33, Cys36, Cys52, and Cys55 each coordinate Zn(2+). A C4-type zinc finger spans residues Cys33–Cys55.

Belongs to the AccD/PCCB family. Acetyl-CoA carboxylase is a heterohexamer composed of biotin carboxyl carrier protein (AccB), biotin carboxylase (AccC) and two subunits each of ACCase subunit alpha (AccA) and ACCase subunit beta (AccD). The cofactor is Zn(2+).

It localises to the cytoplasm. It carries out the reaction N(6)-carboxybiotinyl-L-lysyl-[protein] + acetyl-CoA = N(6)-biotinyl-L-lysyl-[protein] + malonyl-CoA. The protein operates within lipid metabolism; malonyl-CoA biosynthesis; malonyl-CoA from acetyl-CoA: step 1/1. Its function is as follows. Component of the acetyl coenzyme A carboxylase (ACC) complex. Biotin carboxylase (BC) catalyzes the carboxylation of biotin on its carrier protein (BCCP) and then the CO(2) group is transferred by the transcarboxylase to acetyl-CoA to form malonyl-CoA. The chain is Acetyl-coenzyme A carboxylase carboxyl transferase subunit beta from Prochlorococcus marinus (strain NATL2A).